The primary structure comprises 237 residues: Uridylate kinase (237 aa).

11 to 14 (KLSG) contributes to the ATP binding site. Gly52 serves as a coordination point for UMP. Residues Gly53 and Arg57 each contribute to the ATP site. UMP is bound by residues Asp72 and 134–141 (TGYSYFTT). The ATP site is built by Asn162, Tyr168, and Asp171.

It belongs to the UMP kinase family. As to quaternary structure, homohexamer.

The protein resides in the cytoplasm. It carries out the reaction UMP + ATP = UDP + ADP. The protein operates within pyrimidine metabolism; CTP biosynthesis via de novo pathway; UDP from UMP (UMPK route): step 1/1. Inhibited by UTP. Catalyzes the reversible phosphorylation of UMP to UDP. The protein is Uridylate kinase of Mycoplasma capricolum subsp. capricolum (strain California kid / ATCC 27343 / NCTC 10154).